Reading from the N-terminus, the 220-residue chain is Putative amino-acid transporter YisU (220 aa).

6 consecutive transmembrane segments (helical) span residues 15–35 (FFSMNAIIHGIVLAFGLILPL), 67–87 (TLLIVLAVAGVSVIVQELPVF), 89–109 (TVMMAGGFLFLLYMGWVTWNI), 128–148 (AFAAAVSLLNPHAILDTIGVI), 161–181 (WLFMAACIAVSWIWFISLAIA), and 195–215 (MLIVNKCSAAVMWAAAGYFGV).

The protein belongs to the LysE/ArgO transporter (TC 2.A.75) family.

It is found in the cell membrane. The protein is Putative amino-acid transporter YisU (yisU) of Bacillus subtilis (strain 168).